The chain runs to 145 residues: Selenoprotein M (145 aa).

A signal peptide spans 1-23 (MSILLSPPSLLLLLAALVAPATS). Residues C45 and U48 each act as nucleophile in the active site. A cross-link (cysteinyl-selenocysteine (Cys-Sec)) is located at residues 45–48 (CGGU). A non-standard amino acid (selenocysteine) is located at residue U48. The tract at residues 125 to 145 (PPEYLWAPAKPPEEASEHDDL) is disordered.

It belongs to the selenoprotein M/F family. In terms of tissue distribution, widely expressed. Highly expressed in brain.

Its subcellular location is the cytoplasm. The protein resides in the perinuclear region. It localises to the endoplasmic reticulum. It is found in the golgi apparatus. Its function is as follows. May function as a thiol-disulfide oxidoreductase that participates in disulfide bond formation. The protein is Selenoprotein M of Mus musculus (Mouse).